Reading from the N-terminus, the 416-residue chain is Putative UV-damage repair protein UvrX (416 aa).

The region spanning 12–196 (ILCVDMKSFY…RPLSKMWGIG (185 aa)) is the UmuC domain. Asp-16 and Asp-115 together coordinate Mg(2+). The active site involves Glu-116.

It belongs to the DNA polymerase type-Y family. Requires Mg(2+) as cofactor.

The sequence is that of Putative UV-damage repair protein UvrX (uvrX) from Bacillus subtilis (strain 168).